Here is a 362-residue protein sequence, read N- to C-terminus: Methylthioribose-1-phosphate isomerase (362 aa).

Substrate is bound by residues 53–55 (RGA), Arg-90, and Gln-201. The active-site Proton donor is Asp-242. A substrate-binding site is contributed by 252-253 (NK).

This sequence belongs to the eIF-2B alpha/beta/delta subunits family. MtnA subfamily.

The enzyme catalyses 5-(methylsulfanyl)-alpha-D-ribose 1-phosphate = 5-(methylsulfanyl)-D-ribulose 1-phosphate. It participates in amino-acid biosynthesis; L-methionine biosynthesis via salvage pathway; L-methionine from S-methyl-5-thio-alpha-D-ribose 1-phosphate: step 1/6. Its function is as follows. Catalyzes the interconversion of methylthioribose-1-phosphate (MTR-1-P) into methylthioribulose-1-phosphate (MTRu-1-P). The sequence is that of Methylthioribose-1-phosphate isomerase from Paramagnetospirillum magneticum (strain ATCC 700264 / AMB-1) (Magnetospirillum magneticum).